The sequence spans 183 residues: Mitochondrial import inner membrane translocase subunit tim17 (183 aa).

A run of 3 helical transmembrane segments spans residues Ala13 to Phe33, Gly57 to Ile77, and Val107 to Met127. Over residues Met131–Gln141 the composition is skewed to polar residues. The interval Met131–Asp183 is disordered. Positions His142 to Lys168 are enriched in basic and acidic residues. Over residues Gln174–Asp183 the composition is skewed to low complexity.

It belongs to the Tim17/Tim22/Tim23 family.

It is found in the mitochondrion inner membrane. May be involved in the translocation of transit peptide-containing proteins across the mitochondrial inner membrane. This is Mitochondrial import inner membrane translocase subunit tim17 (timm17) from Dictyostelium discoideum (Social amoeba).